The following is a 276-amino-acid chain: 3-methyl-2-oxobutanoate hydroxymethyltransferase (276 aa).

The Mg(2+) site is built by Asp45 and Asp84. Residues 45-46 (DS), Asp84, and Lys114 contribute to the 3-methyl-2-oxobutanoate site. Glu116 serves as a coordination point for Mg(2+). The active-site Proton acceptor is the Glu183.

This sequence belongs to the PanB family. Homodecamer; pentamer of dimers. The cofactor is Mg(2+).

It is found in the cytoplasm. It carries out the reaction 3-methyl-2-oxobutanoate + (6R)-5,10-methylene-5,6,7,8-tetrahydrofolate + H2O = 2-dehydropantoate + (6S)-5,6,7,8-tetrahydrofolate. It functions in the pathway cofactor biosynthesis; (R)-pantothenate biosynthesis; (R)-pantoate from 3-methyl-2-oxobutanoate: step 1/2. In terms of biological role, catalyzes the reversible reaction in which hydroxymethyl group from 5,10-methylenetetrahydrofolate is transferred onto alpha-ketoisovalerate to form ketopantoate. The sequence is that of 3-methyl-2-oxobutanoate hydroxymethyltransferase from Syntrophomonas wolfei subsp. wolfei (strain DSM 2245B / Goettingen).